Consider the following 511-residue polypeptide: Aprataxin and PNK-like factor (511 aa).

Positions 1–108 (MSGGFELQPR…RILSIPSEVE (108 aa)) constitute an FHA-like domain. The residue at position 116 (Ser116) is a Phosphoserine; by ATM. The residue at position 149 (Ser149) is a Phosphoserine. The KBM signature appears at 182–191 (RKRILPTWML). The tract at residues 223 to 370 (KSQLNTTQQG…ATDSVLQGSE (148 aa)) is disordered. 2 stretches are compositionally biased toward polar residues: residues 225 to 249 (QLNTTQQGRRQLISSGSSENTSAEQ) and 263 to 293 (STISSKEMPQSFSAITLSNTEMNNIKTNAQR). Over residues 304-315 (VSKHKIATKRTP) the composition is skewed to basic residues. Polar residues predominate over residues 324–344 (CSENCSSAQGDSLQDESQGSH). Residues 345–355 (SESSSNPSNPE) show a composition bias toward low complexity. Arg376, Tyr381, Tyr386, and Arg387 together coordinate a glycoprotein. The PBZ-type 1 zinc finger occupies 377 to 398 (TSCMYGANCYRKNPVHFQHFSH). The flexible linker stretch occupies residues 406–416 (GVQIVGQDETD). Residues 419 to 440 (PECPYGPSCYRKNPQHKIEYRH) form a PBZ-type 2 zinc finger. Positions 423, 428, and 429 each coordinate a glycoprotein. A disordered region spans residues 449-497 (LDEDNDNVGQPNEYDLNDSFLDDEEEDYEPTDEDSDWEPGKEDEEKEDV). Over residues 468–497 (FLDDEEEDYEPTDEDSDWEPGKEDEEKEDV) the composition is skewed to acidic residues. The short motif at 476 to 500 (YEPTDEDSDWEPGKEDEEKEDVEEL) is the NAP1L motif element. Positions 487–511 (PGKEDEEKEDVEELLKEAKRFMKRK) form a coiled coil.

The protein belongs to the APLF family. As to quaternary structure, interacts with LIG4. Interacts with PARP1. Interacts with XRCC4. Interacts (via KBM motif) with XRCC5 and XRCC6; promoting recruitment to DNA damage sites. Interacts with XRCC1. Interacts (via C-terminal disordered region) with histones; interacts with histone H2A, H2B and H3-H4. Poly-ADP-ribosylated. In addition to binding non covalently poly-ADP-ribose via its PBZ-type zinc fingers, the protein is also covalently poly-ADP-ribosylated by PARP1. In terms of processing, phosphorylated in an ATM-dependent manner upon double-strand DNA break.

The protein localises to the nucleus. Its subcellular location is the chromosome. It localises to the cytoplasm. It is found in the cytosol. Histone chaperone involved in single-strand and double-strand DNA break repair. Recruited to sites of DNA damage through interaction with branched poly-ADP-ribose chains, a polymeric post-translational modification synthesized transiently at sites of chromosomal damage to accelerate DNA strand break repair reactions. Following recruitment to DNA damage sites, acts as a histone chaperone that mediates histone eviction during DNA repair and promotes recruitment of histone variant MACROH2A1. Also has a nuclease activity: displays apurinic-apyrimidinic (AP) endonuclease and 3'-5' exonuclease activities in vitro. Also able to introduce nicks at hydroxyuracil and other types of pyrimidine base damage. Together with PARP3, promotes the retention of the LIG4-XRCC4 complex on chromatin and accelerate DNA ligation during non-homologous end-joining (NHEJ). Also acts as a negative regulator of cell pluripotency by promoting histone exchange. Required for the embryo implantation during the epithelial to mesenchymal transition in females. This chain is Aprataxin and PNK-like factor, found in Homo sapiens (Human).